Here is a 77-residue protein sequence, read N- to C-terminus: Translation initiation factor IF-1, chloroplastic (77 aa).

Residues Met1–Arg71 form the S1-like domain.

The protein belongs to the IF-1 family. In terms of assembly, component of the 30S ribosomal translation pre-initiation complex which assembles on the 30S ribosome in the order IF-2 and IF-3, IF-1 and N-formylmethionyl-tRNA(fMet); mRNA recruitment can occur at any time during PIC assembly.

The protein localises to the plastid. It localises to the chloroplast. Functionally, one of the essential components for the initiation of protein synthesis. Stabilizes the binding of IF-2 and IF-3 on the 30S subunit to which N-formylmethionyl-tRNA(fMet) subsequently binds. Helps modulate mRNA selection, yielding the 30S pre-initiation complex (PIC). Upon addition of the 50S ribosomal subunit IF-1, IF-2 and IF-3 are released leaving the mature 70S translation initiation complex. The polypeptide is Translation initiation factor IF-1, chloroplastic (Lactuca sativa (Garden lettuce)).